Reading from the N-terminus, the 281-residue chain is sn-glycerol-3-phosphate transport system permease protein UgpE (281 aa).

The next 6 helical transmembrane spans lie at 16 to 36 (LILGIAVILFPLYVAFVAATL), 85 to 105 (FSITLGKITVSMLSAFAIVWF), 113 to 133 (FFWMIFITLMLPVEVRIFPTV), 142 to 162 (LDSYAGLTLPLMASATATFLF), 202 to 222 (ALFVITFIYGWNQYLWPLLII), and 247 to 267 (WNSVMAAMLLTLIPPVVIVLV). The 192-residue stretch at 77–268 (LLNSFVMAFS…IPPVVIVLVM (192 aa)) folds into the ABC transmembrane type-1 domain.

This sequence belongs to the binding-protein-dependent transport system permease family. UgpAE subfamily. As to quaternary structure, the complex is composed of two ATP-binding proteins (UgpC), two transmembrane proteins (UgpA and UgpE) and a solute-binding protein (UgpB).

The protein resides in the cell inner membrane. Part of the ABC transporter complex UgpBAEC involved in sn-glycerol-3-phosphate (G3P) import. Probably responsible for the translocation of the substrate across the membrane. In Escherichia coli O157:H7, this protein is sn-glycerol-3-phosphate transport system permease protein UgpE (ugpE).